The primary structure comprises 433 residues: Small ribosomal subunit biogenesis GTPase RsgA 1, mitochondrial (433 aa).

Positions 1-20 (MLRAKHIGKNYSSSLSPVLS) are disordered. The CP-type G domain occupies 113 to 291 (SEILDPPVAN…LADTPGFNQP (179 aa)). 212–220 (GPSGVGKSS) contributes to the GTP binding site. Zn(2+) is bound by residues Cys-317, Cys-322, His-324, and Cys-330.

This sequence belongs to the TRAFAC class YlqF/YawG GTPase family. RsgA subfamily. As to quaternary structure, monomer. Associates with 30S ribosomal subunit, binds 16S rRNA. Requires Zn(2+) as cofactor.

Its subcellular location is the mitochondrion. In terms of biological role, one of several proteins that assist in the late maturation steps of the functional core of the 30S ribosomal subunit. Helps release RbfA from mature subunits. May play a role in the assembly of ribosomal proteins into the subunit. Circularly permuted GTPase that catalyzes slow GTP hydrolysis, GTPase activity is stimulated by the 30S ribosomal subunit. Required for embryo development. The chain is Small ribosomal subunit biogenesis GTPase RsgA 1, mitochondrial from Arabidopsis thaliana (Mouse-ear cress).